Reading from the N-terminus, the 308-residue chain is Cell division protein FtsX (308 aa).

Residues 1–24 (MISRFFRHLFEALKSLKRNGWMTV) lie on the Cytoplasmic side of the membrane. A helical membrane pass occupies residues 25 to 45 (AAVSSVMITLTLVAIFASVIF). Over 46 to 178 (NTAKLATDIE…NTERLFKLAS (133 aa)) the chain is Extracellular. A helical transmembrane segment spans residues 179-199 (FIRVWGLGIAALLIFIAVFLI). Residues 200–236 (SNTIRITIISRSREIQIMRLVGAKNSYIRGPFLLEGA) lie on the Cytoplasmic side of the membrane. A helical transmembrane segment spans residues 237-257 (FIGLLGAIAPSVLVFIVYQIV). Topologically, residues 258–276 (YQSVNKSLVGQNLSMISPD) are extracellular. Residues 277–297 (LFSPLMIALLFVIGVFIGSLG) form a helical membrane-spanning segment. The Cytoplasmic portion of the chain corresponds to 298-308 (SGISMRRFLKI).

The protein belongs to the ABC-4 integral membrane protein family. FtsX subfamily. Homodimer. Interacts with FtsE; forms a membrane-associated complex. Interacts (via large extracellular loop) with PcsB (via N-terminal coiled-coil domain). This interaction directs PcsB to equatorial and septal sites of dividing cells.

The protein localises to the cell membrane. Functionally, part of the ABC transporter FtsEX involved in asymmetric cellular division facilitating the initiation of sporulation. Required in maintaining normal growth and cellular morphology. The protein is Cell division protein FtsX of Streptococcus pneumoniae serotype 2 (strain D39 / NCTC 7466).